A 580-amino-acid polypeptide reads, in one-letter code: MTMINPLSYPVPSQYSYTYNNNNNNSNNSSNNNSNNNSNNNNNNNNNCGVPNVSYGSNLNQQSMAQDLRVPEQYSISSPSPKKRPFNSTMTTSPPTPTLLSNSPYIHGSHIVPQYSPQLQNVYNTPHQSSHSIHQPPQQTPNIFNNNNNNNNNNEKSNNQNFGNTLFNSITNNSSNSSNSLIQQNNLTNNGSSSSSSSSSSTNFNQNNNFINSSNDSIYNSNICSFYGNTSSSSSSSLNGIESPPSVELMDDDIEDQLREYISPVIWGMMDNYAREQFYNAIVEFINEEISFRSLLLELRVIAVMDVNYKSIFQFLVDLFLSIEPNQKMVNYLRDNGVEENEFNIDLKSLELSSDNDSNQKKKRERIRKSVSRGLRNPPNKWAKEESQKLIQLVHEHGDKQWKKIAHQIGGGKTGAQCAQHWKRVLCPAIRKGSWDEDEESKLFNLVEKHGQSWKNVASEIRTRTDIQCRYQYFKSCMSREVQWSSREDEILQKKVSENNQQDGTININNTRDISWMDVSKAMARGRQTKIPRTALECKTRYFQLNFGGAPIQIVVPHNDDHLNNPHSPLNSLLQDQNCY.

Disordered stretches follow at residues 1–58 (MTMI…YGSN), 73–101 (QYSI…TLLS), 121–203 (NVYN…SSTN), and 354–380 (SDND…NPPN). Low complexity-rich tracts occupy residues 20-47 (NNNN…NNNN), 87-101 (NSTM…TLLS), and 126-203 (PHQS…SSTN). Residues 361–371 (KKKRERIRKSV) are compositionally biased toward basic residues. 2 consecutive HTH myb-type domains span residues 368–430 (RKSV…CPAI) and 431–482 (RKGS…SREV). 2 consecutive DNA-binding regions (H-T-H motif) follow at residues 402-426 (WKKI…KRVL) and 454-478 (WKNV…KSCM). The 63-residue stretch at 484–546 (WSSREDEILQ…ECKTRYFQLN (63 aa)) folds into the Myb-like domain.

The protein resides in the nucleus. Transcription activator required for the culmination, at the time of the fruiting body formation. Regulates genes involved in the cell differentiation within the fruiting body. The sequence is that of Myb-like protein C (mybC) from Dictyostelium discoideum (Social amoeba).